Here is a 508-residue protein sequence, read N- to C-terminus: Lysine--tRNA ligase (508 aa).

Positions 416 and 423 each coordinate Mg(2+).

It belongs to the class-II aminoacyl-tRNA synthetase family. In terms of assembly, homodimer. Requires Mg(2+) as cofactor.

It is found in the cytoplasm. The enzyme catalyses tRNA(Lys) + L-lysine + ATP = L-lysyl-tRNA(Lys) + AMP + diphosphate. This is Lysine--tRNA ligase from Prochlorococcus marinus (strain MIT 9303).